An 86-amino-acid chain; its full sequence is Large ribosomal subunit protein eL43 (86 aa).

The C4-type zinc-finger motif lies at 38–59; that stretch reads CPVCGRKAVRRISTGIWQCQKC.

Belongs to the eukaryotic ribosomal protein eL43 family. The cofactor is Zn(2+).

This Thermococcus onnurineus (strain NA1) protein is Large ribosomal subunit protein eL43.